Here is a 288-residue protein sequence, read N- to C-terminus: Glucose uptake protein GlcU (288 aa).

A run of 10 helical transmembrane segments spans residues 4–26 (LIALLPALFWGSVVLINVLVGGG), 33–51 (GTTFGALIIGIILLLTGNA), 56–75 (LTIIIVGLISGAFWALGQGY), 82–104 (LIGVSKTMPISTGLQLVGTTLFS), 114–136 (GVQVTLGLVAMVLLVIGIALTSI), 148–170 (NFGKAMPILLISTVGYVVYVVVA), 180–197 (ALFFQSIGMAIGGLILSA), 206–225 (TLWNLIPGIVWGIGNLFMFY), 230–252 (VGVATSFSFSQLLVIVSTLGGIF), and 264–283 (IGIWAGIVLIVIAPLYSEIL).

Belongs to the GRP transporter (TC 2.A.7.5) family.

The protein localises to the cell membrane. Involved in the uptake of glucose. This Staphylococcus xylosus protein is Glucose uptake protein GlcU (glcU).